A 552-amino-acid chain; its full sequence is CTP synthase (552 aa).

The tract at residues 1-265 (MTKFVFVTGG…DRIVCEKLAL (265 aa)) is amidoligase domain. CTP is bound at residue Ser13. Position 13 (Ser13) interacts with UTP. ATP-binding positions include 14 to 19 (SLGKGI) and Asp71. Asp71 and Glu139 together coordinate Mg(2+). CTP is bound by residues 146-148 (DIE), 186-191 (KTKPTQ), and Lys222. UTP-binding positions include 186–191 (KTKPTQ) and Lys222. A Glutamine amidotransferase type-1 domain is found at 290–545 (TIGMVGKYVD…IKAALAHKQA (256 aa)). Gly351 provides a ligand contact to L-glutamine. The active-site Nucleophile; for glutamine hydrolysis is Cys378. Residues 379–382 (LGMQ), Glu402, and Arg468 contribute to the L-glutamine site. Active-site residues include His518 and Glu520.

Belongs to the CTP synthase family. As to quaternary structure, homotetramer.

The catalysed reaction is UTP + L-glutamine + ATP + H2O = CTP + L-glutamate + ADP + phosphate + 2 H(+). It carries out the reaction L-glutamine + H2O = L-glutamate + NH4(+). It catalyses the reaction UTP + NH4(+) + ATP = CTP + ADP + phosphate + 2 H(+). It participates in pyrimidine metabolism; CTP biosynthesis via de novo pathway; CTP from UDP: step 2/2. With respect to regulation, allosterically activated by GTP, when glutamine is the substrate; GTP has no effect on the reaction when ammonia is the substrate. The allosteric effector GTP functions by stabilizing the protein conformation that binds the tetrahedral intermediate(s) formed during glutamine hydrolysis. Inhibited by the product CTP, via allosteric rather than competitive inhibition. Functionally, catalyzes the ATP-dependent amination of UTP to CTP with either L-glutamine or ammonia as the source of nitrogen. Regulates intracellular CTP levels through interactions with the four ribonucleotide triphosphates. The sequence is that of CTP synthase from Herminiimonas arsenicoxydans.